The sequence spans 74 residues: Small ribosomal subunit protein bS20c (74 aa).

This sequence belongs to the bacterial ribosomal protein bS20 family.

The protein localises to the plastid. The protein resides in the chloroplast. In terms of biological role, binds directly to 16S ribosomal RNA. The polypeptide is Small ribosomal subunit protein bS20c (Cyanidioschyzon merolae (strain NIES-3377 / 10D) (Unicellular red alga)).